Reading from the N-terminus, the 332-residue chain is Spherulin-4 (332 aa).

Residues 1-22 (MNIKIVVLVIFAILLGSALAWH) form the signal peptide. The tract at residues 26–60 (HHNPTKAPTEAPHRGGGGGGGHNTPAPTQPPRQNT) is disordered.

This chain is Spherulin-4, found in Physarum polycephalum (Slime mold).